The sequence spans 205 residues: Thymidine kinase (205 aa).

ATP contacts are provided by residues 9-16 (SAMNAGKS) and 87-90 (DECQ). Glutamate 88 acts as the Proton acceptor in catalysis. Positions 145, 147, 182, and 185 each coordinate Zn(2+).

This sequence belongs to the thymidine kinase family. As to quaternary structure, homotetramer.

The protein resides in the cytoplasm. The catalysed reaction is thymidine + ATP = dTMP + ADP + H(+). Allosteric enzyme which is feedback inhibited by dTTP and activated by a number of dNDP and dNTP. Its function is as follows. Phosphorylates both thymidine and deoxyuridine. The polypeptide is Thymidine kinase (Escherichia coli (strain K12)).